Reading from the N-terminus, the 273-residue chain is 3-methyl-2-oxobutanoate hydroxymethyltransferase (273 aa).

Mg(2+)-binding residues include Asp49 and Asp88. 3-methyl-2-oxobutanoate contacts are provided by residues 49–50, Asp88, and Lys118; that span reads DS. Position 120 (Glu120) interacts with Mg(2+). The active-site Proton acceptor is Glu187.

It belongs to the PanB family. As to quaternary structure, homodecamer; pentamer of dimers. Mg(2+) is required as a cofactor.

The protein localises to the cytoplasm. The enzyme catalyses 3-methyl-2-oxobutanoate + (6R)-5,10-methylene-5,6,7,8-tetrahydrofolate + H2O = 2-dehydropantoate + (6S)-5,6,7,8-tetrahydrofolate. It functions in the pathway cofactor biosynthesis; (R)-pantothenate biosynthesis; (R)-pantoate from 3-methyl-2-oxobutanoate: step 1/2. Functionally, catalyzes the reversible reaction in which hydroxymethyl group from 5,10-methylenetetrahydrofolate is transferred onto alpha-ketoisovalerate to form ketopantoate. This Sinorhizobium fredii (strain NBRC 101917 / NGR234) protein is 3-methyl-2-oxobutanoate hydroxymethyltransferase.